The following is a 173-amino-acid chain: Small ribosomal subunit protein uS10m (173 aa).

The protein belongs to the universal ribosomal protein uS10 family. Component of the mitochondrial ribosome small subunit (28S) which comprises a 12S rRNA and about 30 distinct proteins.

It is found in the mitochondrion. The polypeptide is Small ribosomal subunit protein uS10m (mRpS10) (Drosophila melanogaster (Fruit fly)).